Consider the following 101-residue polypeptide: Small ribosomal subunit protein uS14 (101 aa).

This sequence belongs to the universal ribosomal protein uS14 family. In terms of assembly, part of the 30S ribosomal subunit. Contacts proteins S3 and S10.

Its function is as follows. Binds 16S rRNA, required for the assembly of 30S particles and may also be responsible for determining the conformation of the 16S rRNA at the A site. This is Small ribosomal subunit protein uS14 from Shewanella halifaxensis (strain HAW-EB4).